The following is a 415-amino-acid chain: Metal tolerance protein 5 (415 aa).

Over 1–124 (MAAAVAGGGE…REKVARSETL (124 aa)) the chain is Cytoplasmic. A helical membrane pass occupies residues 125 to 145 (AIRLSNIANMVLFAAKVYASV). Over 146-150 (RSGSL) the chain is Vacuolar. A helical membrane pass occupies residues 151-171 (AIIASTLDSLLDLLSGFILWF). Residues 172–192 (TAFSMQTPNPYRYPIGKKRMQ) lie on the Cytoplasmic side of the membrane. Residues 193–213 (PLGILVFASVMATLGLQIILE) traverse the membrane as a helical segment. At 214 to 232 (SVRSLLSDGDEFSLTKEQE) the chain is on the vacuolar side. Residues 233 to 253 (KWVVDIMLAVTLVKLALVLYC) form a helical membrane-spanning segment. The Cytoplasmic portion of the chain corresponds to 254–268 (RTFTNEIVKAYAQDH). A helical membrane pass occupies residues 269–291 (FFDVITNMIGLVAALLATYIEGW). At 292-293 (ID) the chain is on the vacuolar side. A helical transmembrane segment spans residues 294–313 (PVGAIILAIYTIRTWSMTVL). Over 314–415 (ENVHSLVGQS…RPEHALSHEK (102 aa)) the chain is Cytoplasmic.

The protein belongs to the cation diffusion facilitator (CDF) transporter (TC 2.A.4) family. SLC30A subfamily.

It localises to the vacuole membrane. In terms of biological role, involved in sequestration of excess metal in the cytoplasm into vacuoles to maintain metal homeostasis. The polypeptide is Metal tolerance protein 5 (MTP5) (Oryza sativa subsp. japonica (Rice)).